We begin with the raw amino-acid sequence, 181 residues long: Phospholipase A2 inhibitor gamma subunit B (181 aa).

Cystine bridges form between Cys-3-Cys-27, Cys-6-Cys-13, Cys-20-Cys-48, Cys-54-Cys-75, Cys-76-Cys-81, Cys-101-Cys-126, Cys-119-Cys-146, and Cys-152-Cys-172.

The protein belongs to the CNF-like-inhibitor family. In terms of assembly, heterotrimer of 2 subunits A and 1 subunit B. As to expression, expressed by the liver.

Its subcellular location is the secreted. Strongly inhibits its own venom PLA2 and all other PLA2s tested including Elapid, Crotalid and Viperid venom PLA2s, as well as honeybee PLA2s. The sequence is that of Phospholipase A2 inhibitor gamma subunit B from Laticauda semifasciata (Black-banded sea krait).